Here is a 387-residue protein sequence, read N- to C-terminus: Protein-glutamate methylesterase/protein-glutamine glutaminase 2 (387 aa).

A Response regulatory domain is found at 4-121; sequence KVLVVDDSGF…SRNPQKVKQL (118 aa). The residue at position 55 (aspartate 55) is a 4-aspartylphosphate. Over residues 148-183 the composition is skewed to low complexity; the sequence is AAPAAPTSSSRAPAPTTAPARAVPTRTAAPATAPAA. The interval 148–199 is disordered; sequence AAPAAPTSSSRAPAPTTAPARAVPTRTAAPATAPAAHAHHAPAHPTTSGTPK. The region spanning 192 to 384 is the CheB-type methylesterase domain; that stretch reads PTTSGTPKRK…LDDIGRHLVE (193 aa). Active-site residues include serine 211, histidine 238, and aspartate 331.

It belongs to the CheB family. In terms of processing, phosphorylated by CheA. Phosphorylation of the N-terminal regulatory domain activates the methylesterase activity.

The protein resides in the cytoplasm. The enzyme catalyses [protein]-L-glutamate 5-O-methyl ester + H2O = L-glutamyl-[protein] + methanol + H(+). The catalysed reaction is L-glutaminyl-[protein] + H2O = L-glutamyl-[protein] + NH4(+). Involved in chemotaxis. Part of a chemotaxis signal transduction system that modulates chemotaxis in response to various stimuli. Catalyzes the demethylation of specific methylglutamate residues introduced into the chemoreceptors (methyl-accepting chemotaxis proteins or MCP) by CheR. Also mediates the irreversible deamidation of specific glutamine residues to glutamic acid. The polypeptide is Protein-glutamate methylesterase/protein-glutamine glutaminase 2 (Pseudomonas savastanoi pv. phaseolicola (strain 1448A / Race 6) (Pseudomonas syringae pv. phaseolicola (strain 1448A / Race 6))).